The following is a 248-amino-acid chain: Proteasome subunit alpha type-3 (248 aa).

The protein belongs to the peptidase T1A family. As to quaternary structure, the 26S proteasome consists of a 20S proteasome core and two 19S regulatory subunits. The 20S proteasome core is composed of 28 subunits that are arranged in four stacked rings, resulting in a barrel-shaped structure. The two end rings are each formed by seven alpha subunits, and the two central rings are each formed by seven beta subunits. The catalytic chamber with the active sites is on the inside of the barrel.

It is found in the cytoplasm. The protein localises to the nucleus. In terms of biological role, the proteasome is a multicatalytic proteinase complex which is characterized by its ability to cleave peptides with Arg, Phe, Tyr, Leu, and Glu adjacent to the leaving group at neutral or slightly basic pH. The proteasome has an ATP-dependent proteolytic activity. The sequence is that of Proteasome subunit alpha type-3 (psmA3) from Dictyostelium discoideum (Social amoeba).